Here is a 265-residue protein sequence, read N- to C-terminus: Putative hydro-lyase Teth514_1597 (265 aa).

This sequence belongs to the D-glutamate cyclase family.

The chain is Putative hydro-lyase Teth514_1597 from Thermoanaerobacter sp. (strain X514).